Consider the following 121-residue polypeptide: 18 kDa learning-associated protein of slug (121 aa).

Disordered regions lie at residues 44–67 and 95–121; these read TMKTTEPIQENKTSEGTSTDGSME and AVKKQKQKLNKLKIKKKSGKVSKAIKW. The segment covering 45–64 has biased composition (polar residues); it reads MKTTEPIQENKTSEGTSTDG.

Belongs to the learning-associated protein family. Expressed predominantly in cerebral ganglia (at protein level). The mRNA is highly expressed in cerebral ganglia, and is detected at lower levels in visceral-pedal ganglia, head, and body, but is not detected in the tail.

It localises to the cytoplasm. It is found in the secreted. In terms of biological role, may be involved in modulating long-term memory formation and retention, at least with respect to odor-taste associative learning. The chain is 18 kDa learning-associated protein of slug from Lehmannia marginata (Tree slug).